The sequence spans 286 residues: ATP synthase gamma chain (286 aa).

This sequence belongs to the ATPase gamma chain family. F-type ATPases have 2 components, CF(1) - the catalytic core - and CF(0) - the membrane proton channel. CF(1) has five subunits: alpha(3), beta(3), gamma(1), delta(1), epsilon(1). CF(0) has three main subunits: a, b and c.

It is found in the cell inner membrane. Produces ATP from ADP in the presence of a proton gradient across the membrane. The gamma chain is believed to be important in regulating ATPase activity and the flow of protons through the CF(0) complex. The polypeptide is ATP synthase gamma chain (Pseudomonas putida (strain ATCC 700007 / DSM 6899 / JCM 31910 / BCRC 17059 / LMG 24140 / F1)).